We begin with the raw amino-acid sequence, 21 residues long: Protein YadW (21 aa).

The polypeptide is Protein YadW (Escherichia coli (strain K12)).